Reading from the N-terminus, the 281-residue chain is Sulfur carrier protein FdhD (281 aa).

C117 serves as the catalytic Cysteine persulfide intermediate.

Belongs to the FdhD family.

The protein localises to the cytoplasm. In terms of biological role, required for formate dehydrogenase (FDH) activity. Acts as a sulfur carrier protein that transfers sulfur from IscS to the molybdenum cofactor prior to its insertion into FDH. The polypeptide is Sulfur carrier protein FdhD (Xanthomonas euvesicatoria pv. vesicatoria (strain 85-10) (Xanthomonas campestris pv. vesicatoria)).